The sequence spans 88 residues: Conotoxin tx9a (88 aa).

Positions 1–27 are cleaved as a signal peptide; sequence MHLSLARSAVLMLLLLFALGNFVVVQS. Residues 28–58 constitute a propeptide that is removed on maturation; sequence GQITRDVDNGQLTDNRRNLQSKWKPVSLYMS. Intrachain disulfides connect cysteine 62–cysteine 76, cysteine 66–cysteine 78, and cysteine 72–cysteine 83. 2 positions are modified to 4-carboxyglutamate; partial: glutamate 68 and glutamate 73. Residue asparagine 87 is modified to Asparagine amide.

Post-translationally, exists in 4 different forms, depending on gamma-carboxyglutamations. Tx9a-EE does not contain gamma-carboxyglutamate, tx9a-E/gamma has one gamma-carboxyglutamate at position 73, tx9a-gamma/E has one gamma-carboxyglutamate at position 68, and tx9a-agmma/gamma has two gamma-carboxyglutamates at positions 68 and 73. Expressed by the venom duct. All different gamma-carboxyalted forms are mostly present in part 2, part 3 and part 4 of the venom duct. They are also found in part 1 (proximal part near the venom bulb) and part 5, but in lower quantity.

The protein localises to the secreted. Neurotoxin. In vivo, intracranial injection into mice of 10 pmol/g of the peptide induces running in circles and hyperactivity. At higher doses (50 pmol/g), the mice exhibit running and climbing symptoms for close to one hour. Between 130 and 150 pmol/g, characteristic 'spasmodic' symptomatology is elicited. A hand clap would make mice jump high and start running rapidly. When exposed to a loud hand clap, or if the cage cover were dropped, the mice lose motor control and exhibit seizure-like symptoms from which they eventually recover. At the highest doses tested (over 250 pmol/g), after the characteristic spasmodic symptomatology, lethality occurs. Injection of a similar dose range intramuscularly into Siamese fighting fish elicited no unusual symptomatology. In Conus textile (Cloth-of-gold cone), this protein is Conotoxin tx9a.